The following is a 113-amino-acid chain: Beta-microseminoprotein (113 aa).

The first 20 residues, 1 to 20 (MEAWLGSLLFLATMVIASKA), serve as a signal peptide directing secretion. Disulfide bonds link cysteine 22-cysteine 69, cysteine 38-cysteine 61, cysteine 56-cysteine 92, cysteine 59-cysteine 68, and cysteine 83-cysteine 106.

Belongs to the beta-microseminoprotein family. In terms of assembly, homodimer; Interacts with PI16.

Its subcellular location is the secreted. This Mus musculus (Mouse) protein is Beta-microseminoprotein (Msmb).